Reading from the N-terminus, the 86-residue chain is Probable protein BRICK1 (86 aa).

Residues 47 to 81 (EATTKSKLASLNEKLDILERKLEVLEVQVSSATTN) are a coiled coil.

Belongs to the BRK1 family. As to quaternary structure, binds SCAR.

The protein resides in the cytoplasm. It localises to the cytoskeleton. Functionally, involved in regulation of actin and microtubule organization. Part of a WAVE complex that activates the Arp2/3 complex. The protein is Probable protein BRICK1 of Oryza sativa subsp. japonica (Rice).